The sequence spans 320 residues: Acetyl-coenzyme A carboxylase carboxyl transferase subunit alpha (320 aa).

The 262-residue stretch at 33-294 folds into the CoA carboxyltransferase C-terminal domain; the sequence is AFDTEIQALR…GDAVEDELKA (262 aa).

This sequence belongs to the AccA family. As to quaternary structure, acetyl-CoA carboxylase is a heterohexamer composed of biotin carboxyl carrier protein (AccB), biotin carboxylase (AccC) and two subunits each of ACCase subunit alpha (AccA) and ACCase subunit beta (AccD).

The protein localises to the cytoplasm. The catalysed reaction is N(6)-carboxybiotinyl-L-lysyl-[protein] + acetyl-CoA = N(6)-biotinyl-L-lysyl-[protein] + malonyl-CoA. The protein operates within lipid metabolism; malonyl-CoA biosynthesis; malonyl-CoA from acetyl-CoA: step 1/1. Component of the acetyl coenzyme A carboxylase (ACC) complex. First, biotin carboxylase catalyzes the carboxylation of biotin on its carrier protein (BCCP) and then the CO(2) group is transferred by the carboxyltransferase to acetyl-CoA to form malonyl-CoA. This is Acetyl-coenzyme A carboxylase carboxyl transferase subunit alpha from Caulobacter vibrioides (strain ATCC 19089 / CIP 103742 / CB 15) (Caulobacter crescentus).